Here is a 324-residue protein sequence, read N- to C-terminus: Phospho-N-acetylmuramoyl-pentapeptide-transferase (324 aa).

Helical transmembrane passes span 5-25 (VILFTAGLAFIITVVLSPIFI), 55-75 (GGLMILLSLSITTWLMSDIFF), 81-101 (TYMLLFVTVGYGLLGFIDDFI), 122-142 (LIALIFYFFFQHYSMSTVVSI), 147-167 (VSLDLGVAYVLLIIFMLVGGS), 176-196 (LDGLLAGTAAIAFGAYAVLAW), 203-223 (VAIFSVAVVGAVLGFLVFNAH), 227-247 (VFMGDTGSLALGGAIVTIAIL), 250-270 (LEILLVIIGGVFVIETLSVII), and 302-322 (VVVTFWAVGLLFAILGIYIEV).

It belongs to the glycosyltransferase 4 family. MraY subfamily. Requires Mg(2+) as cofactor.

It localises to the cell membrane. It carries out the reaction UDP-N-acetyl-alpha-D-muramoyl-L-alanyl-gamma-D-glutamyl-meso-2,6-diaminopimeloyl-D-alanyl-D-alanine + di-trans,octa-cis-undecaprenyl phosphate = di-trans,octa-cis-undecaprenyl diphospho-N-acetyl-alpha-D-muramoyl-L-alanyl-D-glutamyl-meso-2,6-diaminopimeloyl-D-alanyl-D-alanine + UMP. It participates in cell wall biogenesis; peptidoglycan biosynthesis. Functionally, catalyzes the initial step of the lipid cycle reactions in the biosynthesis of the cell wall peptidoglycan: transfers peptidoglycan precursor phospho-MurNAc-pentapeptide from UDP-MurNAc-pentapeptide onto the lipid carrier undecaprenyl phosphate, yielding undecaprenyl-pyrophosphoryl-MurNAc-pentapeptide, known as lipid I. The polypeptide is Phospho-N-acetylmuramoyl-pentapeptide-transferase (Anoxybacillus flavithermus (strain DSM 21510 / WK1)).